A 335-amino-acid chain; its full sequence is Phosphoserine phosphatase RsbU (335 aa).

The 211-residue stretch at 123-333 (DIGAISVPAK…DDFTLIVLRR (211 aa)) folds into the PPM-type phosphatase domain.

The enzyme catalyses O-phospho-L-serine + H2O = L-serine + phosphate. It carries out the reaction O-phospho-D-serine + H2O = D-serine + phosphate. Stimulated by a long-lived interaction with RsbT. Functionally, positive regulator of sigma-B activity. Dephosphorylates RsbV in response to environmental stress conveyed from the RsbXST module. This is Phosphoserine phosphatase RsbU (rsbU) from Bacillus subtilis (strain 168).